The chain runs to 319 residues: MDKNLHQPLGGNEMPRFGGIATMMRLPHVQSPAELDALDAAFVGVPLDIGTSLRSGTRFGPREIRAESVMIRPYNMATGAAPFDSLNVADIGDVAINTFNLLEAVRIIEQEYDRILGHGILPLTLGGDHTITLPILRAIKKKHGKVGLVHVDAHADVNDHMFGEKIAHGTTFRRAVEEDLLDCDRVVQIGLRAQGYTAEDFNWSRKQGFRVVQAEECWHKSLEPLMAEVREKVGGGPVYLSFDIDGIDPAWAPGTGTPEIGGLTTIQAMEIIRGCQGLDLIGCDLVEVSPPYDTTGNTSLLGANLLYEMLCVLPGVVRR.

Positions 129, 152, 154, 156, 243, and 245 each coordinate Mn(2+).

Belongs to the arginase family. Agmatinase subfamily. In terms of assembly, homohexamer. Mn(2+) is required as a cofactor.

It carries out the reaction 4-guanidinobutanoate + H2O = urea + 4-aminobutanoate. Its function is as follows. Catalyzes specifically the hydrolysis of 4-guanidinobutanoate to 4-aminobutanoate and urea. Has no activity against arginine, agmatine, 3-guanidinopropionate and guanidinoacetate. The protein is Guanidinobutyrase (gbuA) of Pseudomonas aeruginosa (strain ATCC 15692 / DSM 22644 / CIP 104116 / JCM 14847 / LMG 12228 / 1C / PRS 101 / PAO1).